Here is a 195-residue protein sequence, read N- to C-terminus: Imidazoleglycerol-phosphate dehydratase (195 aa).

This sequence belongs to the imidazoleglycerol-phosphate dehydratase family.

The protein localises to the cytoplasm. The catalysed reaction is D-erythro-1-(imidazol-4-yl)glycerol 3-phosphate = 3-(imidazol-4-yl)-2-oxopropyl phosphate + H2O. It participates in amino-acid biosynthesis; L-histidine biosynthesis; L-histidine from 5-phospho-alpha-D-ribose 1-diphosphate: step 6/9. This is Imidazoleglycerol-phosphate dehydratase from Alkaliphilus metalliredigens (strain QYMF).